The sequence spans 83 residues: uncharacterized protein (83 aa).

This is an uncharacterized protein from Bacillus subtilis (strain 168).